The sequence spans 354 residues: Dihydroorotate dehydrogenase (quinone) (354 aa).

FMN contacts are provided by residues 61–65 and Ala85; that span reads AGYDK. Lys65 is a binding site for substrate. 110–114 serves as a coordination point for substrate; sequence NRFGF. Positions 139 and 170 each coordinate FMN. Position 170 (Asn170) interacts with substrate. Ser173 acts as the Nucleophile in catalysis. Substrate is bound at residue Asn175. FMN contacts are provided by Lys211 and Thr239. 240–241 contacts substrate; it reads NT. Residues Gly261, Gly290, and 311 to 312 each bind FMN; that span reads YT.

The protein belongs to the dihydroorotate dehydrogenase family. Type 2 subfamily. In terms of assembly, monomer. FMN is required as a cofactor.

It is found in the cell membrane. The catalysed reaction is (S)-dihydroorotate + a quinone = orotate + a quinol. Its pathway is pyrimidine metabolism; UMP biosynthesis via de novo pathway; orotate from (S)-dihydroorotate (quinone route): step 1/1. Catalyzes the conversion of dihydroorotate to orotate with quinone as electron acceptor. The protein is Dihydroorotate dehydrogenase (quinone) of Cereibacter sphaeroides (strain ATCC 17023 / DSM 158 / JCM 6121 / CCUG 31486 / LMG 2827 / NBRC 12203 / NCIMB 8253 / ATH 2.4.1.) (Rhodobacter sphaeroides).